The following is a 284-amino-acid chain: Polyamine aminopropyltransferase (284 aa).

Residues 2-237 (ELWYTEKHTE…GHWLFGFASK (236 aa)) form the PABS domain. Gln31 lines the S-methyl-5'-thioadenosine pocket. Spermidine is bound by residues His62 and Asp86. S-methyl-5'-thioadenosine contacts are provided by residues Glu106 and 137–138 (DG). Residue Asp155 is the Proton acceptor of the active site. Spermidine is bound at residue 155-158 (DSTD). Pro162 is a binding site for S-methyl-5'-thioadenosine.

This sequence belongs to the spermidine/spermine synthase family. In terms of assembly, homodimer or homotetramer.

The protein resides in the cytoplasm. It catalyses the reaction S-adenosyl 3-(methylsulfanyl)propylamine + putrescine = S-methyl-5'-thioadenosine + spermidine + H(+). It functions in the pathway amine and polyamine biosynthesis; spermidine biosynthesis; spermidine from putrescine: step 1/1. In terms of biological role, catalyzes the irreversible transfer of a propylamine group from the amino donor S-adenosylmethioninamine (decarboxy-AdoMet) to putrescine (1,4-diaminobutane) to yield spermidine. The chain is Polyamine aminopropyltransferase from Clostridium botulinum (strain Eklund 17B / Type B).